Consider the following 941-residue polypeptide: Pre-mRNA-processing factor 6 (941 aa).

Residues 1 to 79 (MNKKKKPFLG…DEDLNDTNYD (79 aa)) are disordered. Basic and acidic residues predominate over residues 39–65 (DANDPVDDRHAPPGKRTVGDQMKKNQA). The span at 66–78 (ADDDDEDLNDTNY) shows a compositional bias: acidic residues. A Phosphoserine modification is found at S143. A phosphothreonine mark is found at T180, T266, and T275. S279 is subject to Phosphoserine. HAT repeat units follow at residues 384–416 (TDIRAKKRVLRKALEHVPNSVRLWKAAVELEEP), 418–444 (DARIMLSRAVECCPTSVELWLALARLE), 445–476 (TYENARKVLNKARENIPTDRHIWITAAKLEEA), 554–586 (NALECARAIYAYALQVFPSKKSVWLRAAYFEKN), 588–620 (GTRESLEALLQRAVAHCPKAEVLWLMGAKSKWL), 622–654 (GDVPAARSILALAFQANPNSEEIWLAAVKLESE), 689–721 (GNISAAQELCEEALRHYEDFPKLWMMKGQIEEQ), 723–755 (ELMEKAREAYNQGLKKCPHSTPLWLLLSRLEEK), and 855–887 (RKITKAREWFHRTVKIDSDLGDAWAFFYKFELQ).

Identified in the spliceosome B complex. Identified in the spliceosome C complex. Associates with the U5 snRNP particle. Component of the U4/U6-U5 tri-snRNP complex composed of the U4, U6 and U5 snRNAs and at least PRPF3, PRPF4, PRPF6, PRPF8, PRPF31, SNRNP200, TXNL4A, SNRNP40, DDX23, CD2BP2, PPIH, SNU13, EFTUD2, SART1 and USP39, LSm proteins LSm2-8 and Sm proteins. Interacts with ARAF1. Interacts with AR and NR3C1, but not ESR1, independently of the presence of hormones. Interacts with USH1G. In terms of processing, phosphorylated by PRP4K during spliceosome assembly.

It is found in the nucleus. It localises to the nucleoplasm. Its subcellular location is the nucleus speckle. Functionally, involved in pre-mRNA splicing as component of the U4/U6-U5 tri-snRNP complex, one of the building blocks of the spliceosome. Enhances dihydrotestosterone-induced transactivation activity of AR, as well as dexamethasone-induced transactivation activity of NR3C1, but does not affect estrogen-induced transactivation. In Mus musculus (Mouse), this protein is Pre-mRNA-processing factor 6 (Prpf6).